We begin with the raw amino-acid sequence, 541 residues long: Glucose-6-phosphate isomerase (541 aa).

The Proton donor role is filled by Glu347. Active-site residues include His378 and Lys506.

Belongs to the GPI family.

Its subcellular location is the cytoplasm. It catalyses the reaction alpha-D-glucose 6-phosphate = beta-D-fructose 6-phosphate. It functions in the pathway carbohydrate biosynthesis; gluconeogenesis. It participates in carbohydrate degradation; glycolysis; D-glyceraldehyde 3-phosphate and glycerone phosphate from D-glucose: step 2/4. Its function is as follows. Catalyzes the reversible isomerization of glucose-6-phosphate to fructose-6-phosphate. The chain is Glucose-6-phosphate isomerase from Francisella tularensis subsp. holarctica (strain OSU18).